Reading from the N-terminus, the 229-residue chain is Potassium/proton antiporter CemA (229 aa).

A run of 2 helical transmembrane segments spans residues 114-134 (IIYF…LIIL) and 189-209 (IISG…KYWI).

Belongs to the CemA family.

The protein localises to the plastid. Its subcellular location is the chloroplast inner membrane. The enzyme catalyses K(+)(in) + H(+)(out) = K(+)(out) + H(+)(in). In terms of biological role, contributes to K(+)/H(+) antiport activity by supporting proton efflux to control proton extrusion and homeostasis in chloroplasts in a light-dependent manner to modulate photosynthesis. Prevents excessive induction of non-photochemical quenching (NPQ) under continuous-light conditions. Indirectly promotes efficient inorganic carbon uptake into chloroplasts. The sequence is that of Potassium/proton antiporter CemA from Lotus japonicus (Lotus corniculatus var. japonicus).